Consider the following 370-residue polypeptide: Glutamate 5-kinase (370 aa).

Lysine 11 is an ATP binding site. Substrate-binding residues include serine 52, aspartate 139, and asparagine 151. Residues 171 to 172 (TD) and 213 to 219 (TGGMATK) each bind ATP. The region spanning 278–356 (TGKLLLDAGA…DQIVQILGYE (79 aa)) is the PUA domain.

Belongs to the glutamate 5-kinase family.

Its subcellular location is the cytoplasm. It carries out the reaction L-glutamate + ATP = L-glutamyl 5-phosphate + ADP. It functions in the pathway amino-acid biosynthesis; L-proline biosynthesis; L-glutamate 5-semialdehyde from L-glutamate: step 1/2. Catalyzes the transfer of a phosphate group to glutamate to form L-glutamate 5-phosphate. The chain is Glutamate 5-kinase from Synechococcus sp. (strain ATCC 27144 / PCC 6301 / SAUG 1402/1) (Anacystis nidulans).